The primary structure comprises 259 residues: Deoxyribose-phosphate aldolase (259 aa).

The active-site Proton donor/acceptor is Asp102. Lys167 acts as the Schiff-base intermediate with acetaldehyde in catalysis. The Proton donor/acceptor role is filled by Lys201.

It belongs to the DeoC/FbaB aldolase family. DeoC type 2 subfamily.

The protein localises to the cytoplasm. It catalyses the reaction 2-deoxy-D-ribose 5-phosphate = D-glyceraldehyde 3-phosphate + acetaldehyde. It participates in carbohydrate degradation; 2-deoxy-D-ribose 1-phosphate degradation; D-glyceraldehyde 3-phosphate and acetaldehyde from 2-deoxy-alpha-D-ribose 1-phosphate: step 2/2. Its function is as follows. Catalyzes a reversible aldol reaction between acetaldehyde and D-glyceraldehyde 3-phosphate to generate 2-deoxy-D-ribose 5-phosphate. The polypeptide is Deoxyribose-phosphate aldolase (Proteus mirabilis (strain HI4320)).